Here is a 440-residue protein sequence, read N- to C-terminus: Xylose isomerase (440 aa).

Active-site residues include H101 and D104. Positions 232, 268, 271, 296, 307, 309, and 339 each coordinate Mg(2+).

It belongs to the xylose isomerase family. Homotetramer. The cofactor is Mg(2+).

The protein localises to the cytoplasm. It catalyses the reaction alpha-D-xylose = alpha-D-xylulofuranose. This chain is Xylose isomerase, found in Salmonella typhi.